The primary structure comprises 353 residues: Phosphoribosylformylglycinamidine cyclo-ligase (353 aa).

It belongs to the AIR synthase family.

It is found in the cytoplasm. The enzyme catalyses 2-formamido-N(1)-(5-O-phospho-beta-D-ribosyl)acetamidine + ATP = 5-amino-1-(5-phospho-beta-D-ribosyl)imidazole + ADP + phosphate + H(+). Its pathway is purine metabolism; IMP biosynthesis via de novo pathway; 5-amino-1-(5-phospho-D-ribosyl)imidazole from N(2)-formyl-N(1)-(5-phospho-D-ribosyl)glycinamide: step 2/2. The polypeptide is Phosphoribosylformylglycinamidine cyclo-ligase (Magnetococcus marinus (strain ATCC BAA-1437 / JCM 17883 / MC-1)).